Reading from the N-terminus, the 248-residue chain is Adenosylcobinamide-GDP ribazoletransferase (248 aa).

Transmembrane regions (helical) follow at residues E24–W44, I70–S90, V106–L126, I134–A154, T157–V177, L188–Y210, and A228–I248.

The protein belongs to the CobS family. It depends on Mg(2+) as a cofactor.

It is found in the cell membrane. It carries out the reaction alpha-ribazole + adenosylcob(III)inamide-GDP = adenosylcob(III)alamin + GMP + H(+). The catalysed reaction is alpha-ribazole 5'-phosphate + adenosylcob(III)inamide-GDP = adenosylcob(III)alamin 5'-phosphate + GMP + H(+). It participates in cofactor biosynthesis; adenosylcobalamin biosynthesis; adenosylcobalamin from cob(II)yrinate a,c-diamide: step 7/7. Functionally, joins adenosylcobinamide-GDP and alpha-ribazole to generate adenosylcobalamin (Ado-cobalamin). Also synthesizes adenosylcobalamin 5'-phosphate from adenosylcobinamide-GDP and alpha-ribazole 5'-phosphate. This Listeria monocytogenes serotype 4b (strain CLIP80459) protein is Adenosylcobinamide-GDP ribazoletransferase.